A 226-amino-acid polypeptide reads, in one-letter code: Purine nucleoside phosphorylase Cj1217c (226 aa).

Positions 58, 93, and 109 each coordinate Zn(2+).

It belongs to the purine nucleoside phosphorylase YfiH/LACC1 family. As to quaternary structure, homodimer. Cu(2+) is required as a cofactor. Zn(2+) serves as cofactor.

It carries out the reaction adenosine + phosphate = alpha-D-ribose 1-phosphate + adenine. The catalysed reaction is S-methyl-5'-thioadenosine + phosphate = 5-(methylsulfanyl)-alpha-D-ribose 1-phosphate + adenine. It catalyses the reaction inosine + phosphate = alpha-D-ribose 1-phosphate + hypoxanthine. The enzyme catalyses adenosine + H2O + H(+) = inosine + NH4(+). Functionally, purine nucleoside enzyme that catalyzes the phosphorolysis of adenosine and inosine nucleosides, yielding D-ribose 1-phosphate and the respective free bases, adenine and hypoxanthine. Also catalyzes the phosphorolysis of S-methyl-5'-thioadenosine into adenine and S-methyl-5-thio-alpha-D-ribose 1-phosphate. Also has adenosine deaminase activity. The sequence is that of Purine nucleoside phosphorylase Cj1217c from Campylobacter jejuni subsp. jejuni serotype O:2 (strain ATCC 700819 / NCTC 11168).